Here is a 646-residue protein sequence, read N- to C-terminus: Leukotriene A-4 hydrolase homolog (646 aa).

Residues 172–174 and 307–312 contribute to the a peptide site; these read QCQ and PYGGME. Histidine 336 is a Zn(2+) binding site. The active-site Proton acceptor is glutamate 337. Histidine 340 and glutamate 359 together coordinate Zn(2+). The active-site Proton donor is tyrosine 424.

The protein belongs to the peptidase M1 family. The cofactor is Zn(2+).

Its subcellular location is the cytoplasm. It is found in the nucleus. It catalyses the reaction leukotriene A4 + H2O = leukotriene B4. Its pathway is lipid metabolism; leukotriene B4 biosynthesis. In terms of biological role, aminopeptidase that preferentially cleaves tripeptides. Also has low epoxide hydrolase activity (in vitro). Can hydrolyze an epoxide moiety of LTA(4) to form LTB(4) (in vitro). The polypeptide is Leukotriene A-4 hydrolase homolog (Botryotinia fuckeliana (strain B05.10) (Noble rot fungus)).